The sequence spans 74 residues: Small ribosomal subunit protein bS18 (74 aa).

The protein belongs to the bacterial ribosomal protein bS18 family. In terms of assembly, part of the 30S ribosomal subunit. Forms a tight heterodimer with protein bS6.

In terms of biological role, binds as a heterodimer with protein bS6 to the central domain of the 16S rRNA, where it helps stabilize the platform of the 30S subunit. The protein is Small ribosomal subunit protein bS18 of Alkalilimnicola ehrlichii (strain ATCC BAA-1101 / DSM 17681 / MLHE-1).